The primary structure comprises 351 residues: MKKVVVGLSGGVDSSTAAAILHHQGYEVIGLTLWLMKGKGQCCSEGMIDAADLCEQLGVPHQIVDIRDLFQTHIVDYLVTGYSAGITPLPCSQCNKTVKFGPMVQYAREELGCDRIATGHYARISYDEATGRYQLLRAIDRNKDQSYFLYDLSQDLLAATIFPLGELEKTDTRRIATEYGLKTADKPESQDLCLVESNGSMRAFLDKYLAPKSGDIVDTTGKILGQHDGVHHYTIGQRKGLGIAAAEPLYVIELDAENNKVVVGDRTKVTQPECTVNRVNWVSIAEPSTPIHAEVQIRYRSTPTPVTVIPLENSRVRLVFDEPQFSITPGQAAVWYDGEKVLGGGIIEQFS.

Residues G7–S14 and L33 contribute to the ATP site. C94 (nucleophile) is an active-site residue. A disulfide bridge connects residues C94 and C193. An ATP-binding site is contributed by G119. Residues K143–Q145 are interaction with tRNA. C193 functions as the Cysteine persulfide intermediate in the catalytic mechanism. Residues R298–Y299 are interaction with tRNA.

The protein belongs to the MnmA/TRMU family.

It is found in the cytoplasm. It catalyses the reaction S-sulfanyl-L-cysteinyl-[protein] + uridine(34) in tRNA + AH2 + ATP = 2-thiouridine(34) in tRNA + L-cysteinyl-[protein] + A + AMP + diphosphate + H(+). Its function is as follows. Catalyzes the 2-thiolation of uridine at the wobble position (U34) of tRNA, leading to the formation of s(2)U34. This Nostoc punctiforme (strain ATCC 29133 / PCC 73102) protein is tRNA-specific 2-thiouridylase MnmA.